Reading from the N-terminus, the 353-residue chain is Ribosomal RNA small subunit methyltransferase (353 aa).

A compositionally biased stretch (basic residues) spans 1 to 10; it reads MAGGKIRKEK. A disordered region spans residues 1-23; sequence MAGGKIRKEKPKASNRAPSNHYQ. Residues His35, Leu37, Gly62, Glu83, Asp111, and Asn126 each coordinate S-adenosyl-L-methionine. A disordered region spans residues 270-313; that stretch reads ALNTTSMDLGDQSMGMEDDDNEMDDDDMEMDEGEGDGGETSEFK. A compositionally biased stretch (acidic residues) spans 285–308; it reads MEDDDNEMDDDDMEMDEGEGDGGE.

Belongs to the class I-like SAM-binding methyltransferase superfamily. rRNA adenine N(6)-methyltransferase family. As to expression, expressed in rapidly dividing tissues, including root meristems and lateral root primordia, developing cotyledons and leaves, petals, anther, pollen grains and silique abscission zone.

The protein resides in the nucleus. Its subcellular location is the nucleolus. It carries out the reaction adenosine(1785)/adenosine(1786) in 18S rRNA + 4 S-adenosyl-L-methionine = N(6)-dimethyladenosine(1785)/N(6)-dimethyladenosine(1786) in 18S rRNA + 4 S-adenosyl-L-homocysteine + 4 H(+). In terms of biological role, N6-adenine methyltransferase which modifies the AA dinucleotide at the plant nuclear 18S rRNA nucleotides A1785 and A1786. Required for generating appropriate patterns of gene expression during root development, including the cell-specific expression of transcriptional regulators involved in root hair and non-hair cells patterning. The chain is Ribosomal RNA small subunit methyltransferase from Arabidopsis thaliana (Mouse-ear cress).